We begin with the raw amino-acid sequence, 350 residues long: Guanine nucleotide-binding protein G(t) subunit alpha-1 (350 aa).

Residues M1–E21 are disordered. G2 carries the N-myristoyl glycine lipid modification. Residues A7 to E21 show a composition bias toward basic and acidic residues. In terms of domain architecture, G-alpha spans R28–F350. The tract at residues K31–T44 is G1 motif. G36 to S43 contacts GTP. Residue S43 coordinates Mg(2+). Y142 is subject to Phosphotyrosine; by SRC. GTP is bound by residues D146, L171–T177, G199, N265–D268, and A322. The interval D169–T177 is G2 motif. The residue at position 174 (R174) is an ADP-ribosylarginine; by cholera toxin. Residue T177 coordinates Mg(2+). The tract at residues F192 to R201 is G3 motif. Positions V261 to D268 are G4 motif. The interval T320–T325 is G5 motif. An interaction with RHO region spans residues I340 to F350. Residue C347 is modified to ADP-ribosylcysteine; by pertussis toxin.

This sequence belongs to the G-alpha family. G(i/o/t/z) subfamily. As to quaternary structure, heterotrimeric G proteins are composed of 3 subunits alpha, beta and gamma. The alpha chain contains the guanine nucleotide binding site. Interacts with RHO. Interacts with RGS9 and PDE6G. Interacts (when myristoylated) with UNC119; interaction is required for localization in sensory neurons. In terms of tissue distribution, rod photoreceptor cells. Predominantly expressed in the retina followed by the ciliary body, iris and retinal pigment epithelium.

The protein resides in the cell projection. It localises to the cilium. It is found in the photoreceptor outer segment. Its subcellular location is the membrane. The protein localises to the photoreceptor inner segment. Functionally, functions as a signal transducer for the rod photoreceptor RHO. Required for normal RHO-mediated light perception by the retina. Guanine nucleotide-binding proteins (G proteins) function as transducers downstream of G protein-coupled receptors (GPCRs), such as the photoreceptor RHO. The alpha chain contains the guanine nucleotide binding site and alternates between an active, GTP-bound state and an inactive, GDP-bound state. Activated RHO promotes GDP release and GTP binding. Signaling is mediated via downstream effector proteins, such as cGMP-phosphodiesterase. The chain is Guanine nucleotide-binding protein G(t) subunit alpha-1 (GNAT1) from Homo sapiens (Human).